Reading from the N-terminus, the 254-residue chain is Peptide methionine sulfoxide reductase A5 (254 aa).

Residues M1–G26 form the signal peptide.

It belongs to the MsrA Met sulfoxide reductase family.

The enzyme catalyses L-methionyl-[protein] + [thioredoxin]-disulfide + H2O = L-methionyl-(S)-S-oxide-[protein] + [thioredoxin]-dithiol. It carries out the reaction [thioredoxin]-disulfide + L-methionine + H2O = L-methionine (S)-S-oxide + [thioredoxin]-dithiol. Catalyzes the reduction of methionine sulfoxide (MetSO) to methionine in proteins. Plays a protective role against oxidative stress by restoring activity to proteins that have been inactivated by methionine oxidation. MSRA family specifically reduces the MetSO S-enantiomer. This Oryza sativa subsp. japonica (Rice) protein is Peptide methionine sulfoxide reductase A5 (MSRA5).